A 217-amino-acid chain; its full sequence is Adenylate kinase (217 aa).

ATP is bound at residue 10–15; it reads GAGKGT. The segment at 30-59 is NMP; the sequence is STGDIFRAAMKNETPMGIEAKKYIDKGELV. AMP-binding positions include T31, R36, 57–59, 85–88, and Q92; these read ELV and GFPR. Residues 126-164 are LID; the sequence is GRFICRNCGATYHKLYNAPKVEGTCDVCGHHEFYQRDDD. Position 127 (R127) interacts with ATP. 2 residues coordinate Zn(2+): C130 and C133. 136-137 contributes to the ATP binding site; the sequence is TY. Residues C150 and C153 each coordinate Zn(2+). R161 and R172 together coordinate AMP. Q200 provides a ligand contact to ATP.

This sequence belongs to the adenylate kinase family. In terms of assembly, monomer.

Its subcellular location is the cytoplasm. The catalysed reaction is AMP + ATP = 2 ADP. It participates in purine metabolism; AMP biosynthesis via salvage pathway; AMP from ADP: step 1/1. Catalyzes the reversible transfer of the terminal phosphate group between ATP and AMP. Plays an important role in cellular energy homeostasis and in adenine nucleotide metabolism. In Limosilactobacillus reuteri subsp. reuteri (strain JCM 1112) (Lactobacillus reuteri), this protein is Adenylate kinase.